The chain runs to 247 residues: uncharacterized protein (247 aa).

Belongs to the AIM2 family.

It localises to the cytoplasm. It is found in the nucleus. This is an uncharacterized protein from Schizosaccharomyces pombe (strain 972 / ATCC 24843) (Fission yeast).